The following is a 450-amino-acid chain: Phosphoglucosamine mutase (450 aa).

Catalysis depends on serine 101, which acts as the Phosphoserine intermediate. Mg(2+) is bound by residues serine 101, aspartate 240, aspartate 242, and aspartate 244. Serine 101 bears the Phosphoserine mark.

The protein belongs to the phosphohexose mutase family. The cofactor is Mg(2+). Activated by phosphorylation.

It carries out the reaction alpha-D-glucosamine 1-phosphate = D-glucosamine 6-phosphate. In terms of biological role, catalyzes the conversion of glucosamine-6-phosphate to glucosamine-1-phosphate. This is Phosphoglucosamine mutase from Streptococcus pneumoniae (strain Hungary19A-6).